Consider the following 774-residue polypeptide: DNA ligase 3 (774 aa).

The disordered stretch occupies residues 1 to 25; the sequence is MPPKKRMKNGSSLKSTSKKGEKSRN. Catalysis depends on Lys433, which acts as the N6-AMP-lysine intermediate.

It belongs to the ATP-dependent DNA ligase family.

The protein localises to the nucleus. It carries out the reaction ATP + (deoxyribonucleotide)n-3'-hydroxyl + 5'-phospho-(deoxyribonucleotide)m = (deoxyribonucleotide)n+m + AMP + diphosphate.. This is DNA ligase 3 (adl1) from Schizosaccharomyces pombe (strain 972 / ATCC 24843) (Fission yeast).